A 366-amino-acid polypeptide reads, in one-letter code: Histidinol-phosphate aminotransferase (366 aa).

The residue at position 228 (K228) is an N6-(pyridoxal phosphate)lysine.

The protein belongs to the class-II pyridoxal-phosphate-dependent aminotransferase family. Histidinol-phosphate aminotransferase subfamily. As to quaternary structure, homodimer. Pyridoxal 5'-phosphate is required as a cofactor.

It carries out the reaction L-histidinol phosphate + 2-oxoglutarate = 3-(imidazol-4-yl)-2-oxopropyl phosphate + L-glutamate. The protein operates within amino-acid biosynthesis; L-histidine biosynthesis; L-histidine from 5-phospho-alpha-D-ribose 1-diphosphate: step 7/9. The protein is Histidinol-phosphate aminotransferase of Corynebacterium glutamicum (strain R).